A 199-amino-acid polypeptide reads, in one-letter code: 7-methyl-GTP pyrophosphatase (199 aa).

The Proton acceptor role is filled by Asp76.

Belongs to the Maf family. YceF subfamily. Requires a divalent metal cation as cofactor.

The protein localises to the cytoplasm. The catalysed reaction is N(7)-methyl-GTP + H2O = N(7)-methyl-GMP + diphosphate + H(+). Nucleoside triphosphate pyrophosphatase that hydrolyzes 7-methyl-GTP (m(7)GTP). May have a dual role in cell division arrest and in preventing the incorporation of modified nucleotides into cellular nucleic acids. The chain is 7-methyl-GTP pyrophosphatase from Rhizobium etli (strain ATCC 51251 / DSM 11541 / JCM 21823 / NBRC 15573 / CFN 42).